A 279-amino-acid polypeptide reads, in one-letter code: Thymidylate synthase (279 aa).

DUMP is bound at residue Arg37. His67 is a (6R)-5,10-methylene-5,6,7,8-tetrahydrofolate binding site. 142-143 (RR) is a binding site for dUMP. Residue Cys162 is the Nucleophile of the active site. Residues 182–185 (RSAD), Asn193, and 223–225 (HLY) contribute to the dUMP site. Asp185 provides a ligand contact to (6R)-5,10-methylene-5,6,7,8-tetrahydrofolate. (6R)-5,10-methylene-5,6,7,8-tetrahydrofolate is bound at residue Ser278.

It belongs to the thymidylate synthase family. Bacterial-type ThyA subfamily. In terms of assembly, homodimer.

The protein localises to the cytoplasm. The enzyme catalyses dUMP + (6R)-5,10-methylene-5,6,7,8-tetrahydrofolate = 7,8-dihydrofolate + dTMP. It functions in the pathway pyrimidine metabolism; dTTP biosynthesis. In terms of biological role, catalyzes the reductive methylation of 2'-deoxyuridine-5'-monophosphate (dUMP) to 2'-deoxythymidine-5'-monophosphate (dTMP) while utilizing 5,10-methylenetetrahydrofolate (mTHF) as the methyl donor and reductant in the reaction, yielding dihydrofolate (DHF) as a by-product. This enzymatic reaction provides an intracellular de novo source of dTMP, an essential precursor for DNA biosynthesis. The sequence is that of Thymidylate synthase from Caulobacter vibrioides (strain ATCC 19089 / CIP 103742 / CB 15) (Caulobacter crescentus).